Reading from the N-terminus, the 151-residue chain is Methylated-DNA--protein-cysteine methyltransferase (151 aa).

C119 functions as the Nucleophile; methyl group acceptor in the catalytic mechanism.

This sequence belongs to the MGMT family.

Its subcellular location is the cytoplasm. The enzyme catalyses a 6-O-methyl-2'-deoxyguanosine in DNA + L-cysteinyl-[protein] = S-methyl-L-cysteinyl-[protein] + a 2'-deoxyguanosine in DNA. The catalysed reaction is a 4-O-methyl-thymidine in DNA + L-cysteinyl-[protein] = a thymidine in DNA + S-methyl-L-cysteinyl-[protein]. Its function is as follows. Involved in the cellular defense against the biological effects of O6-methylguanine (O6-MeG) and O4-methylthymine (O4-MeT) in DNA. Repairs the methylated nucleobase in DNA by stoichiometrically transferring the methyl group to a cysteine residue in the enzyme. This is a suicide reaction: the enzyme is irreversibly inactivated. This is Methylated-DNA--protein-cysteine methyltransferase from Saccharolobus islandicus (strain M.16.27) (Sulfolobus islandicus).